The chain runs to 365 residues: Chorismate synthase (365 aa).

NADP(+) contacts are provided by Arg48 and Arg54. Residues 131–133 (RSS), 243–244 (NA), Gly288, 303–307 (KPTSS), and Arg329 contribute to the FMN site.

The protein belongs to the chorismate synthase family. In terms of assembly, homotetramer. Requires FMNH2 as cofactor.

The catalysed reaction is 5-O-(1-carboxyvinyl)-3-phosphoshikimate = chorismate + phosphate. Its pathway is metabolic intermediate biosynthesis; chorismate biosynthesis; chorismate from D-erythrose 4-phosphate and phosphoenolpyruvate: step 7/7. Functionally, catalyzes the anti-1,4-elimination of the C-3 phosphate and the C-6 proR hydrogen from 5-enolpyruvylshikimate-3-phosphate (EPSP) to yield chorismate, which is the branch point compound that serves as the starting substrate for the three terminal pathways of aromatic amino acid biosynthesis. This reaction introduces a second double bond into the aromatic ring system. The sequence is that of Chorismate synthase from Agrobacterium fabrum (strain C58 / ATCC 33970) (Agrobacterium tumefaciens (strain C58)).